The sequence spans 351 residues: Serine/threonine-protein kinase mos (351 aa).

The Protein kinase domain occupies 71-340 (FSIDGVIGSG…ERRTDDTENL (270 aa)). ATP-binding positions include 77-85 (IGSGGFGSV) and Lys98. The active-site Proton acceptor is the Asp194.

Belongs to the protein kinase superfamily. Ser/Thr protein kinase family.

The enzyme catalyses L-seryl-[protein] + ATP = O-phospho-L-seryl-[protein] + ADP + H(+). The catalysed reaction is L-threonyl-[protein] + ATP = O-phospho-L-threonyl-[protein] + ADP + H(+). Suppresses the mitotic cell cycle in oocytes, forcing them to undergo meiosis II to produce haploid gametes. Acts as a MAPK kinase kinase (MAP3K) that acts upstream of MAP kinase in oocytes. The polypeptide is Serine/threonine-protein kinase mos (Patiria pectinifera (Starfish)).